The sequence spans 188 residues: Trafficking protein particle complex subunit 5 (188 aa).

Position 10 is a phosphoserine (Ser10).

Belongs to the TRAPP small subunits family. BET3 subfamily. Component of the multisubunit TRAPP (transport protein particle) complex, which includes at least TRAPPC2, TRAPPC2L, TRAPPC3, TRAPPC3L, TRAPPC4, TRAPPC5, TRAPPC8, TRAPPC9, TRAPPC10, TRAPPC11 and TRAPPC12.

The protein resides in the golgi apparatus. The protein localises to the cis-Golgi network. It is found in the endoplasmic reticulum. Its function is as follows. May play a role in vesicular transport from endoplasmic reticulum to Golgi. The sequence is that of Trafficking protein particle complex subunit 5 (TRAPPC5) from Bos taurus (Bovine).